We begin with the raw amino-acid sequence, 101 residues long: Small ribosomal subunit protein uS14 (101 aa).

Basic and acidic residues predominate over residues 1–10 (MAKKSSIEKN). Residues 1 to 23 (MAKKSSIEKNNRRKKMTKNAAPK) are disordered. The span at 11 to 23 (NRRKKMTKNAAPK) shows a compositional bias: basic residues.

This sequence belongs to the universal ribosomal protein uS14 family. Part of the 30S ribosomal subunit. Contacts proteins S3 and S10.

Its function is as follows. Binds 16S rRNA, required for the assembly of 30S particles and may also be responsible for determining the conformation of the 16S rRNA at the A site. The chain is Small ribosomal subunit protein uS14 from Rhodopseudomonas palustris (strain HaA2).